Consider the following 170-residue polypeptide: tRNA-splicing endonuclease (170 aa).

Active-site residues include Tyr-110, His-116, and Lys-147.

Belongs to the tRNA-intron endonuclease family. Archaeal short subfamily. In terms of assembly, homotetramer; although the tetramer contains four active sites, only two participate in the cleavage. Therefore, it should be considered as a dimer of dimers.

It carries out the reaction pretRNA = a 3'-half-tRNA molecule with a 5'-OH end + a 5'-half-tRNA molecule with a 2',3'-cyclic phosphate end + an intron with a 2',3'-cyclic phosphate and a 5'-hydroxyl terminus.. In terms of biological role, endonuclease that removes tRNA introns. Cleaves pre-tRNA at the 5'- and 3'-splice sites to release the intron. The products are an intron and two tRNA half-molecules bearing 2',3' cyclic phosphate and 5'-OH termini. Recognizes a pseudosymmetric substrate in which 2 bulged loops of 3 bases are separated by a stem of 4 bp. The protein is tRNA-splicing endonuclease of Pyrococcus abyssi (strain GE5 / Orsay).